We begin with the raw amino-acid sequence, 513 residues long: 2-isopropylmalate synthase (513 aa).

The 264-residue stretch at 5–268 folds into the Pyruvate carboxyltransferase domain; that stretch reads LIIFDTTLRD…DVGVDTTQIV (264 aa). Residues aspartate 14, histidine 202, histidine 204, and asparagine 239 each contribute to the Mn(2+) site. The segment at 394–513 is regulatory domain; it reads RFVSLSQRSE…KSSEKLNPQI (120 aa).

Belongs to the alpha-IPM synthase/homocitrate synthase family. LeuA type 1 subfamily. As to quaternary structure, homodimer. Requires Mn(2+) as cofactor.

Its subcellular location is the cytoplasm. It carries out the reaction 3-methyl-2-oxobutanoate + acetyl-CoA + H2O = (2S)-2-isopropylmalate + CoA + H(+). Its pathway is amino-acid biosynthesis; L-leucine biosynthesis; L-leucine from 3-methyl-2-oxobutanoate: step 1/4. Its function is as follows. Catalyzes the condensation of the acetyl group of acetyl-CoA with 3-methyl-2-oxobutanoate (2-ketoisovalerate) to form 3-carboxy-3-hydroxy-4-methylpentanoate (2-isopropylmalate). This is 2-isopropylmalate synthase from Ralstonia nicotianae (strain ATCC BAA-1114 / GMI1000) (Ralstonia solanacearum).